The sequence spans 336 residues: 4-hydroxy-3-methylbut-2-enyl diphosphate reductase (336 aa).

A [4Fe-4S] cluster-binding site is contributed by Cys-21. (2E)-4-hydroxy-3-methylbut-2-enyl diphosphate-binding residues include His-50 and His-86. The dimethylallyl diphosphate site is built by His-50 and His-86. Isopentenyl diphosphate is bound by residues His-50 and His-86. [4Fe-4S] cluster is bound at residue Cys-108. His-136 contributes to the (2E)-4-hydroxy-3-methylbut-2-enyl diphosphate binding site. Position 136 (His-136) interacts with dimethylallyl diphosphate. His-136 is an isopentenyl diphosphate binding site. The Proton donor role is filled by Glu-138. A (2E)-4-hydroxy-3-methylbut-2-enyl diphosphate-binding site is contributed by Thr-177. Cys-207 provides a ligand contact to [4Fe-4S] cluster. Ser-235, Ser-236, Asn-237, and Ser-280 together coordinate (2E)-4-hydroxy-3-methylbut-2-enyl diphosphate. Dimethylallyl diphosphate is bound by residues Ser-235, Ser-236, Asn-237, and Ser-280. Isopentenyl diphosphate is bound by residues Ser-235, Ser-236, Asn-237, and Ser-280.

The protein belongs to the IspH family. It depends on [4Fe-4S] cluster as a cofactor.

The enzyme catalyses isopentenyl diphosphate + 2 oxidized [2Fe-2S]-[ferredoxin] + H2O = (2E)-4-hydroxy-3-methylbut-2-enyl diphosphate + 2 reduced [2Fe-2S]-[ferredoxin] + 2 H(+). It catalyses the reaction dimethylallyl diphosphate + 2 oxidized [2Fe-2S]-[ferredoxin] + H2O = (2E)-4-hydroxy-3-methylbut-2-enyl diphosphate + 2 reduced [2Fe-2S]-[ferredoxin] + 2 H(+). Its pathway is isoprenoid biosynthesis; dimethylallyl diphosphate biosynthesis; dimethylallyl diphosphate from (2E)-4-hydroxy-3-methylbutenyl diphosphate: step 1/1. The protein operates within isoprenoid biosynthesis; isopentenyl diphosphate biosynthesis via DXP pathway; isopentenyl diphosphate from 1-deoxy-D-xylulose 5-phosphate: step 6/6. Functionally, catalyzes the conversion of 1-hydroxy-2-methyl-2-(E)-butenyl 4-diphosphate (HMBPP) into a mixture of isopentenyl diphosphate (IPP) and dimethylallyl diphosphate (DMAPP). Acts in the terminal step of the DOXP/MEP pathway for isoprenoid precursor biosynthesis. In Mesorhizobium japonicum (strain LMG 29417 / CECT 9101 / MAFF 303099) (Mesorhizobium loti (strain MAFF 303099)), this protein is 4-hydroxy-3-methylbut-2-enyl diphosphate reductase.